A 906-amino-acid polypeptide reads, in one-letter code: Coatomer subunit beta' (906 aa).

WD repeat units lie at residues alanine 13–threonine 52, valine 55–methionine 94, alanine 97–glutamine 136, glycine 140–threonine 180, glycine 183–threonine 224, glycine 227–threonine 266, serine 350–phenylalanine 388, and serine 390–lysine 425. Lysine 627 is subject to N6-acetyllysine. The stretch at isoleucine 746–lysine 783 is one WD 9 repeat. The segment at glutamate 837–valine 863 is disordered. Serine 859 carries the phosphoserine modification. The residue at position 861 (threonine 861) is a Phosphothreonine. The stretch at alanine 866–valine 890 forms a coiled coil.

The protein belongs to the WD repeat COPB2 family. As to quaternary structure, oligomeric complex that consists of at least the alpha, beta, beta', gamma, delta, epsilon and zeta subunits. Probably interacts with PEX11A. Interacts with SCYL1. Interacts with JAGN1.

The protein resides in the cytoplasm. It is found in the cytosol. The protein localises to the golgi apparatus membrane. It localises to the cytoplasmic vesicle. Its subcellular location is the COPI-coated vesicle membrane. In terms of biological role, the coatomer is a cytosolic protein complex that binds to dilysine motifs and reversibly associates with Golgi non-clathrin-coated vesicles, which further mediate biosynthetic protein transport from the ER, via the Golgi up to the trans Golgi network. Coatomer complex is required for budding from Golgi membranes, and is essential for the retrograde Golgi-to-ER transport of dilysine-tagged proteins. In mammals, the coatomer can only be recruited by membranes associated to ADP-ribosylation factors (ARFs), which are small GTP-binding proteins; the complex also influences the Golgi structural integrity, as well as the processing, activity, and endocytic recycling of LDL receptors. This coatomer complex protein, essential for Golgi budding and vesicular trafficking, is a selective binding protein (RACK) for protein kinase C, epsilon type. It binds to Golgi membranes in a GTP-dependent manner. In Pongo abelii (Sumatran orangutan), this protein is Coatomer subunit beta' (COPB2).